Consider the following 382-residue polypeptide: Cell division protein FtsZ (382 aa).

GTP contacts are provided by residues 21 to 25 (GGGSN), 108 to 110 (GTG), Glu139, Arg143, and Asp187. The disordered stretch occupies residues 322-382 (RAQQQSNFNR…FLRNRRRKSR (61 aa)). Over residues 340 to 352 (KSKEKEAEKKEPR) the composition is skewed to basic and acidic residues.

The protein belongs to the FtsZ family. Homodimer. Polymerizes to form a dynamic ring structure in a strictly GTP-dependent manner. Interacts directly with several other division proteins.

The protein resides in the cytoplasm. Its function is as follows. Essential cell division protein that forms a contractile ring structure (Z ring) at the future cell division site. The regulation of the ring assembly controls the timing and the location of cell division. One of the functions of the FtsZ ring is to recruit other cell division proteins to the septum to produce a new cell wall between the dividing cells. Binds GTP and shows GTPase activity. The sequence is that of Cell division protein FtsZ from Halalkalibacterium halodurans (strain ATCC BAA-125 / DSM 18197 / FERM 7344 / JCM 9153 / C-125) (Bacillus halodurans).